The following is a 465-amino-acid chain: UDP-glycosyltransferase 89A2 (465 aa).

UDP-alpha-D-glucose is bound by residues S291, 342–344 (VSQ), 359–367 (HCGWNSVLE), and 381–384 (EADQ).

It belongs to the UDP-glycosyltransferase family.

Its function is as follows. Glucosyltransferase that glucosylates benzoates and benzoate derivatives in vitro. The polypeptide is UDP-glycosyltransferase 89A2 (UGT89A2) (Arabidopsis thaliana (Mouse-ear cress)).